The chain runs to 367 residues: tRNA/tmRNA (uracil-C(5))-methyltransferase (367 aa).

The S-adenosyl-L-methionine site is built by glutamine 190, tyrosine 218, asparagine 223, glutamate 239, and aspartate 299. Cysteine 324 acts as the Nucleophile in catalysis. Glutamate 358 acts as the Proton acceptor in catalysis.

It belongs to the class I-like SAM-binding methyltransferase superfamily. RNA M5U methyltransferase family. TrmA subfamily.

The enzyme catalyses uridine(54) in tRNA + S-adenosyl-L-methionine = 5-methyluridine(54) in tRNA + S-adenosyl-L-homocysteine + H(+). The catalysed reaction is uridine(341) in tmRNA + S-adenosyl-L-methionine = 5-methyluridine(341) in tmRNA + S-adenosyl-L-homocysteine + H(+). Functionally, dual-specificity methyltransferase that catalyzes the formation of 5-methyluridine at position 54 (m5U54) in all tRNAs, and that of position 341 (m5U341) in tmRNA (transfer-mRNA). This is tRNA/tmRNA (uracil-C(5))-methyltransferase from Erwinia tasmaniensis (strain DSM 17950 / CFBP 7177 / CIP 109463 / NCPPB 4357 / Et1/99).